A 368-amino-acid polypeptide reads, in one-letter code: MTRPFNFSAGPANLPEEVLQQAAAEMLDWHGSGMSVMEMSHRGKEFISIYENAEADFRELMAIPPNFKILFMQGGGLAENAIVPLNLSRGASADFVVTGSWSDKSQKEARKYCDVQIAATNAGSDHTQLPPPASWNLRRDASYVHVCTNETIHGVEFQELPDIKTLGSDAPLVIDFSSHVASRPVDWSRVGLAFGGAQKNLGPAGVTLVVVREDLMGHALPACPSAFDYKTVADNHSMYNTPPTYAIYIAGLTFQWLKRQKEGDVTGIAAMEKRNLAKAQLLYDAIDRSQLYFNRVGSECRSRMNVPFLLRDESRNEAFLAGAKAHSLLQLKGHKSVGGMRASIYNAMPLAGIEALIGYMREFEQKHA.

Arginine 42 is a binding site for L-glutamate. Tryptophan 101, threonine 151, aspartate 175, and glutamine 198 together coordinate pyridoxal 5'-phosphate. Lysine 199 carries the post-translational modification N6-(pyridoxal phosphate)lysine. Residue 240-241 (NT) coordinates pyridoxal 5'-phosphate.

This sequence belongs to the class-V pyridoxal-phosphate-dependent aminotransferase family. SerC subfamily. In terms of assembly, homodimer. Requires pyridoxal 5'-phosphate as cofactor.

It is found in the cytoplasm. The enzyme catalyses O-phospho-L-serine + 2-oxoglutarate = 3-phosphooxypyruvate + L-glutamate. It carries out the reaction 4-(phosphooxy)-L-threonine + 2-oxoglutarate = (R)-3-hydroxy-2-oxo-4-phosphooxybutanoate + L-glutamate. It functions in the pathway amino-acid biosynthesis; L-serine biosynthesis; L-serine from 3-phospho-D-glycerate: step 2/3. Its pathway is cofactor biosynthesis; pyridoxine 5'-phosphate biosynthesis; pyridoxine 5'-phosphate from D-erythrose 4-phosphate: step 3/5. Functionally, catalyzes the reversible conversion of 3-phosphohydroxypyruvate to phosphoserine and of 3-hydroxy-2-oxo-4-phosphonooxybutanoate to phosphohydroxythreonine. In Polaromonas sp. (strain JS666 / ATCC BAA-500), this protein is Phosphoserine aminotransferase.